The primary structure comprises 368 residues: Agmatine deiminase (368 aa).

Catalysis depends on Cys357, which acts as the Amidino-cysteine intermediate.

Belongs to the agmatine deiminase family. Homodimer.

It catalyses the reaction agmatine + H2O = N-carbamoylputrescine + NH4(+). Its pathway is amine and polyamine biosynthesis; putrescine biosynthesis via agmatine pathway; N-carbamoylputrescine from agmatine: step 1/1. In terms of biological role, mediates the hydrolysis of agmatine into N-carbamoylputrescine in the arginine decarboxylase (ADC) pathway of putrescine biosynthesis, a basic polyamine. This chain is Agmatine deiminase, found in Pseudomonas aeruginosa (strain LESB58).